Here is a 161-residue protein sequence, read N- to C-terminus: Dermonecrotic toxin LarSicTox-alphaI-1 (161 aa).

The protein belongs to the arthropod phospholipase D family. Class II subfamily. Mg(2+) serves as cofactor. In terms of processing, contains 2 disulfide bonds. As to expression, expressed by the venom gland.

The protein localises to the secreted. It carries out the reaction an N-(acyl)-sphingosylphosphocholine = an N-(acyl)-sphingosyl-1,3-cyclic phosphate + choline. It catalyses the reaction an N-(acyl)-sphingosylphosphoethanolamine = an N-(acyl)-sphingosyl-1,3-cyclic phosphate + ethanolamine. The catalysed reaction is a 1-acyl-sn-glycero-3-phosphocholine = a 1-acyl-sn-glycero-2,3-cyclic phosphate + choline. The enzyme catalyses a 1-acyl-sn-glycero-3-phosphoethanolamine = a 1-acyl-sn-glycero-2,3-cyclic phosphate + ethanolamine. Its function is as follows. Dermonecrotic toxins cleave the phosphodiester linkage between the phosphate and headgroup of certain phospholipids (sphingolipid and lysolipid substrates), forming an alcohol (often choline) and a cyclic phosphate. This toxin acts on sphingomyelin (SM). It may also act on ceramide phosphoethanolamine (CPE), lysophosphatidylcholine (LPC) and lysophosphatidylethanolamine (LPE), but not on lysophosphatidylserine (LPS), and lysophosphatidylglycerol (LPG). It acts by transphosphatidylation, releasing exclusively cyclic phosphate products as second products. Induces dermonecrosis, hemolysis, increased vascular permeability, edema, inflammatory response, and platelet aggregation. The sequence is that of Dermonecrotic toxin LarSicTox-alphaI-1 from Loxosceles arizonica (Arizona brown spider).